The following is a 184-amino-acid chain: Serine recombinase PinE (184 aa).

In terms of domain architecture, Resolvase/invertase-type recombinase catalytic spans 1–134 (MLIGYVRVST…AGLETARAQG (134 aa)). Serine 9 (O-(5'-phospho-DNA)-serine intermediate) is an active-site residue. Positions 161 to 180 (RQKVAIIYDVGVSTLYKRFP) form a DNA-binding region, H-T-H motif.

This sequence belongs to the site-specific recombinase resolvase family.

Functionally, this protein catalyzes the inversion of an 1800-bp E.coli DNA fragment, the P region, which can exist in either orientation. The function of the inversion is not yet clear. The chain is Serine recombinase PinE (pinE) from Escherichia coli (strain K12).